Consider the following 185-residue polypeptide: Ribonuclease M5 1 (185 aa).

The Toprim domain occupies 4 to 87 (KEVIVVEGKD…AFLTKHDAAP (84 aa)). Mg(2+) contacts are provided by E10, D56, and D58.

The protein belongs to the ribonuclease M5 family. It depends on Mg(2+) as a cofactor.

It localises to the cytoplasm. The catalysed reaction is Endonucleolytic cleavage of RNA, removing 21 and 42 nucleotides, respectively, from the 5'- and 3'-termini of a 5S-rRNA precursor.. Its function is as follows. Required for correct processing of both the 5' and 3' ends of 5S rRNA precursor. Cleaves both sides of a double-stranded region yielding mature 5S rRNA in one step. The polypeptide is Ribonuclease M5 1 (Ligilactobacillus salivarius (strain UCC118) (Lactobacillus salivarius)).